The sequence spans 247 residues: Carboxy-S-adenosyl-L-methionine synthase (247 aa).

Residues Y40, 65–67, 90–91, 122–123, N137, and R204 contribute to the S-adenosyl-L-methionine site; these read GAS, DN, and DI.

This sequence belongs to the class I-like SAM-binding methyltransferase superfamily. Cx-SAM synthase family. Homodimer.

The enzyme catalyses prephenate + S-adenosyl-L-methionine = carboxy-S-adenosyl-L-methionine + 3-phenylpyruvate + H2O. Functionally, catalyzes the conversion of S-adenosyl-L-methionine (SAM) to carboxy-S-adenosyl-L-methionine (Cx-SAM). This Pseudomonas putida (strain W619) protein is Carboxy-S-adenosyl-L-methionine synthase.